A 289-amino-acid chain; its full sequence is ATP synthase mitochondrial F1 complex assembly factor 2 (289 aa).

The transit peptide at Met-1 to Tyr-40 directs the protein to the mitochondrion. At Lys-133 the chain carries N6-succinyllysine.

This sequence belongs to the ATP12 family. Interacts with ATP5F1B; involved in the assembly of the F1 component of the mitochondrial ATP synthase (ATPase). Interacts with FMC1.

The protein resides in the mitochondrion inner membrane. Its function is as follows. Plays a role in the assembly of the F1 component of the mitochondrial ATP synthase (ATPase). The polypeptide is ATP synthase mitochondrial F1 complex assembly factor 2 (Mus musculus (Mouse)).